A 280-amino-acid polypeptide reads, in one-letter code: Phosphatidylglycerol--prolipoprotein diacylglyceryl transferase (280 aa).

Helical transmembrane passes span 26–46 (LAIH…WFYA), 71–91 (FILW…ILFY), 106–126 (IWNG…AMIL), and 132–152 (GIPV…GLLF). Arg-154 provides a ligand contact to a 1,2-diacyl-sn-glycero-3-phospho-(1'-sn-glycerol). 3 consecutive transmembrane segments (helical) span residues 193–213 (GLEG…FKAL), 217–237 (GTVT…VEFF), and 251–271 (WLTM…WAVL).

This sequence belongs to the Lgt family.

It is found in the cell inner membrane. It carries out the reaction L-cysteinyl-[prolipoprotein] + a 1,2-diacyl-sn-glycero-3-phospho-(1'-sn-glycerol) = an S-1,2-diacyl-sn-glyceryl-L-cysteinyl-[prolipoprotein] + sn-glycerol 1-phosphate + H(+). It participates in protein modification; lipoprotein biosynthesis (diacylglyceryl transfer). Functionally, catalyzes the transfer of the diacylglyceryl group from phosphatidylglycerol to the sulfhydryl group of the N-terminal cysteine of a prolipoprotein, the first step in the formation of mature lipoproteins. This is Phosphatidylglycerol--prolipoprotein diacylglyceryl transferase from Agrobacterium fabrum (strain C58 / ATCC 33970) (Agrobacterium tumefaciens (strain C58)).